The primary structure comprises 444 residues: Ribulose bisphosphate carboxylase (444 aa).

Lys163 acts as the Proton acceptor in catalysis. Lys165 lines the substrate pocket. The Mg(2+) site is built by Lys189, Asp191, and Glu192. Lys189 is modified (N6-carboxylysine). His281 (proton acceptor) is an active-site residue. Residues Arg282, His314, 367–369, and 389–392 contribute to the substrate site; these read SGG and QLGG.

Belongs to the RuBisCO large chain family. Type III subfamily. Homodecamer, consisting of five dimer units which form a ring-like pentagonal structure. This arrangement is essential for its high thermostability. In contrast to form I RuBisCO, the form III RuBisCO is composed solely of large subunits. Requires Mg(2+) as cofactor.

The enzyme catalyses 2 (2R)-3-phosphoglycerate + 2 H(+) = D-ribulose 1,5-bisphosphate + CO2 + H2O. It carries out the reaction D-ribulose 1,5-bisphosphate + O2 = 2-phosphoglycolate + (2R)-3-phosphoglycerate + 2 H(+). Functionally, catalyzes the addition of molecular CO(2) and H(2)O to ribulose 1,5-bisphosphate (RuBP), generating two molecules of 3-phosphoglycerate (3-PGA). Functions in an archaeal AMP degradation pathway, together with AMP phosphorylase and R15P isomerase. This chain is Ribulose bisphosphate carboxylase, found in Thermococcus kodakarensis (strain ATCC BAA-918 / JCM 12380 / KOD1) (Pyrococcus kodakaraensis (strain KOD1)).